Reading from the N-terminus, the 561-residue chain is MKESFKVCFCCVRNFKVKSSEPPEEIKNLFHDYSQDDRMSADEMLRFVIQVQGETHADINYVKDIFHRLKHHGVFHPRGIHLEGFYRYLLSDFNSPLPLTREVWQDMNQPLSHYFLYTGHNSYLTGNQLNSNSSIEPIVKALRNGVRVIELDLWPNSSGKEAEVRHGGTLTSREDLQKCLNVVKENAFQVSAYPVVLTLEDHLTPILQKKVAKMVSKTFGGSLFQCTDETTECFPSPESLKNKILISTKPPKEYLQTQISKGSTTDESTRAKKISDAEEQVQEEDEESVAIEYRDLISIHAGNRKGGLKNCLNGDPNRVIRLSMSEQWLETLAKTRGPDLVKFTQRNLLRIFPKTTRFDSSNYDPLVGWIHGAQMVAFNMQSHGRYLWMMQGMFKANGGCGYVKKPDVLLSNGPEGEIFDPCSQNLPIKTTLKVKIYTGEGWNMDFPLDHFDRYSPPDFYAKVGIAGVPLDTASYRTEIDKDEWFPIWDKEFEFPLRVPELSLLCITVKDYDSNTQNDFAGQTCFPLSEVRPGIRAVRLHDRAGEVYKHVRLLMRFVLEPR.

One can recognise an EF-hand domain in the interval 21 to 54 (EPPEEIKNLFHDYSQDDRMSADEMLRFVIQVQGE). Residues 105-249 (QDMNQPLSHY…LKNKILISTK (145 aa)) form the PI-PLC X-box domain. Residues histidine 120 and histidine 166 contribute to the active site. Residues 256 to 266 (QTQISKGSTTD) show a composition bias toward polar residues. A disordered region spans residues 256 to 285 (QTQISKGSTTDESTRAKKISDAEEQVQEED). The span at 267–276 (ESTRAKKISD) shows a compositional bias: basic and acidic residues. The 117-residue stretch at 294–410 (RDLISIHAGN…GYVKKPDVLL (117 aa)) folds into the PI-PLC Y-box domain. Residues 414–541 (PEGEIFDPCS…PGIRAVRLHD (128 aa)) enclose the C2 domain. Residues aspartate 452, aspartate 458, aspartate 510, aspartate 512, and aspartate 518 each contribute to the Ca(2+) site.

Ca(2+) serves as cofactor. In terms of tissue distribution, expressed in stems, leaves, roots, flowers and siliques. Predominant in the vascular tissues of roots and leaves.

It localises to the cell membrane. It catalyses the reaction a 1,2-diacyl-sn-glycero-3-phospho-(1D-myo-inositol-4,5-bisphosphate) + H2O = 1D-myo-inositol 1,4,5-trisphosphate + a 1,2-diacyl-sn-glycerol + H(+). Its function is as follows. The production of the second messenger molecules diacylglycerol (DAG) and inositol 1,4,5-trisphosphate (IP3) is mediated by activated phosphatidylinositol-specific phospholipase C enzymes. Required for secondary responses to abscisic acid signals. In Arabidopsis thaliana (Mouse-ear cress), this protein is Phosphoinositide phospholipase C 1 (PLC1).